Consider the following 316-residue polypeptide: Probable inactive poly [ADP-ribose] polymerase SRO4 (316 aa).

Residues 1 to 28 (MDYSKTEETPINEEQGSTNSSESRSNEE) are disordered. A compositionally biased stretch (low complexity) spans 14–23 (EQGSTNSSES). A PARP catalytic domain is found at 28–255 (ELFSDCDQQH…KSPWISFPVL (228 aa)). An RST domain is found at 243-314 (KNPKSPWISF…IKSVGQKVHK (72 aa)).

The protein localises to the nucleus. Its function is as follows. Probable inactive ADP-ribosyltransferase that may be involved in stress and developmental responses. In Arabidopsis thaliana (Mouse-ear cress), this protein is Probable inactive poly [ADP-ribose] polymerase SRO4 (SRO4).